A 142-amino-acid polypeptide reads, in one-letter code: Large ribosomal subunit protein uL13 (142 aa).

The protein belongs to the universal ribosomal protein uL13 family. As to quaternary structure, part of the 50S ribosomal subunit.

Functionally, this protein is one of the early assembly proteins of the 50S ribosomal subunit, although it is not seen to bind rRNA by itself. It is important during the early stages of 50S assembly. The protein is Large ribosomal subunit protein uL13 of Hydrogenovibrio crunogenus (strain DSM 25203 / XCL-2) (Thiomicrospira crunogena).